The following is a 1123-amino-acid chain: Telomerase reverse transcriptase (1123 aa).

Positions 1–230 are RNA-interacting domain 1; it reads MPRAPRCRAV…ARRRRGSPGS (230 aa). The GQ motif stretch occupies residues 58-197; it reads VPWGARPPPA…APGLPGLPGL (140 aa). The tract at residues 137 to 141 is required for regulating specificity for telomeric DNA and for processivity for primer elongation; that stretch reads WGLLL. A disordered region spans residues 202–311; sequence AGAGASADLR…GVPHDPAHPE (110 aa). Positions 222 to 240 match the Bipartite nuclear localization signal motif; the sequence is RRRRGSPGSGVPLAKRPRR. Serine 227 carries the post-translational modification Phosphoserine; by PKB/AKT1. The tract at residues 231-308 is linker; the sequence is GVPLAKRPRR…GPQGVPHDPA (78 aa). The segment covering 260 to 279 has biased composition (low complexity); sequence PPVSEAPAVTPAVAASPAAS. Residues 309-539 are RNA-interacting domain 2; it reads HPETKRFLYC…LARFLVLVDG (231 aa). The short motif at 312 to 317 is the TFLY; involved in RNA binding element; the sequence is TKRFLY. The QFP motif stretch occupies residues 360–510; that stretch reads ARRMRRLPAR…MKVRDCTWLH (151 aa). Positions 381-401 are CP motif; the sequence is LGNHARCPYRALLRTHCPLRA. The residue at position 446 (serine 446) is a Phosphoserine; by DYRK2. The Reverse transcriptase domain maps to 595 to 926; sequence EVRRHREARP…CLFPWCGLLL (332 aa). Tyrosine 697 is subject to Phosphotyrosine; by SRC-type Tyr-kinases. 3 residues coordinate Mg(2+): aspartate 702, aspartate 859, and aspartate 860. The segment at 905-919 is required for oligomerization; the sequence is LGSAAPLQLPAHCLF. The tract at residues 921–925 is primer grip sequence; the sequence is WCGLL. The segment at 927–1123 is CTE; that stretch reads DTRTLEVSCD…LTADFKTILD (197 aa).

This sequence belongs to the reverse transcriptase family. Telomerase subfamily. In terms of assembly, catalytic component of the telomerase holoenzyme complex composed of one molecule of TERT, one molecule of WRAP53/TCAB1, two molecules of H/ACA ribonucleoprotein complex subunits DKC1, NOP10, NHP2 and GAR1, and a telomerase RNA template component (TERC). The telomerase holoenzyme complex is associated with TEP1, SMG6/EST1A and POT1. The molecular chaperone HSP90/P23 complex is required for correct assembly and stabilization of the active telomerase. Interacts directly with HSP90A and PTGES3. Interacts with HSPA1A; the interaction occurs in the absence of TERC and dissociates once the complex has formed. Interacts with RAN; the interaction promotes nuclear export of TERT. Interacts with XPO1. Interacts with PTPN11; the interaction retains TERT in the nucleus. Interacts with NCL (via RRM1 and C-terminal RRM4/Arg/Gly-rich domains); the interaction is important for nucleolar localization of TERT. Interacts with SMARCA4 (via the bromodomain); the interaction regulates Wnt-mediated signaling. Interacts with MCRS1 (isoform MCRS2); the interaction inhibits in vitro telomerase activity. Interacts with PIF1; the interaction has no effect on the elongation activity of TERT. Interacts with PML; the interaction recruits TERT to PML bodies and inhibits telomerase activity. Interacts with GNL3L. Interacts with isoform 1 and isoform 2 of NVL. Interacts with DHX36. Interacts with ATF7. Post-translationally, phosphorylation at Tyr-697 under oxidative stress leads to translocation of TERT to the cytoplasm and reduces its antiapoptotic activity. Dephosphorylated by SHP2/PTPN11 leading to nuclear retention. Phosphorylation at Ser-227 by the AKT pathway promotes nuclear location. Phosphorylation at the G2/M phase at Ser-446 by DYRK2 promotes ubiquitination by the EDVP complex and degradation. Ubiquitinated by the EDVP complex, a E3 ligase complex following phosphorylation at Ser-446 by DYRK2. Ubiquitinated leads to proteasomal degradation.

It is found in the nucleus. The protein resides in the nucleolus. It localises to the nucleoplasm. Its subcellular location is the chromosome. The protein localises to the telomere. It is found in the cytoplasm. The protein resides in the PML body. It carries out the reaction DNA(n) + a 2'-deoxyribonucleoside 5'-triphosphate = DNA(n+1) + diphosphate. Functionally, telomerase is a ribonucleoprotein enzyme essential for the replication of chromosome termini in most eukaryotes. Active in progenitor and cancer cells. Inactive, or very low activity, in normal somatic cells. Catalytic component of the teleromerase holoenzyme complex whose main activity is the elongation of telomeres by acting as a reverse transcriptase that adds simple sequence repeats to chromosome ends by copying a template sequence within the RNA component of the enzyme. Catalyzes the RNA-dependent extension of 3'-chromosomal termini with the 6-nucleotide telomeric repeat unit, 5'-TTAGGG-3'. The catalytic cycle involves primer binding, primer extension and release of product once the template boundary has been reached or nascent product translocation followed by further extension. More active on substrates containing 2 or 3 telomeric repeats. Telomerase activity is regulated by a number of factors including telomerase complex-associated proteins, chaperones and polypeptide modifiers. Modulates Wnt signaling. Plays important roles in aging and antiapoptosis. The sequence is that of Telomerase reverse transcriptase (TERT) from Canis lupus familiaris (Dog).